The following is a 555-amino-acid chain: Cilia- and flagella-associated protein 184 (555 aa).

The segment covering 1-12 (MDVSSEHTKDPG) has biased composition (basic and acidic residues). The disordered stretch occupies residues 1 to 202 (MDVSSEHTKD…KSQEEGKRLY (202 aa)). Composition is skewed to acidic residues over residues 41–54 (GELE…EEEQ) and 95–105 (PEPEEPAEVGA). Residues 106 to 117 (EEPAQPEPGAGP) show a composition bias toward low complexity. Acidic residues predominate over residues 118-131 (EELEAEAGAEELEQ). Residues 174–202 (ETQRDGAESKERDGEGRPAKSQEEGKRLY) show a composition bias toward basic and acidic residues. 2 coiled-coil regions span residues 305 to 441 (YHQE…NSVQ) and 505 to 531 (DSLL…LKRH).

The protein belongs to the CFAP184 family. Forms a complex with CFAP263; the interaction is required for functional activity in cilia.

It is found in the cell projection. The protein resides in the cilium. The protein localises to the cytoplasm. It localises to the cytoskeleton. Its subcellular location is the microtubule organizing center. It is found in the centrosome. Functionally, in complex with CFAP263, acts as a regulator of ciliary beating that connects radial spoke 3 (RS3) to the inner dynein arm (IDA) and the nexin-dynein regulatory complex (N-DRC). The complex is positioned parallel to N-DRC and forms a connection between the arch at the base of RS3, the IDA tail and N-DRC. The polypeptide is Cilia- and flagella-associated protein 184 (Homo sapiens (Human)).